A 305-amino-acid chain; its full sequence is Uracil-DNA glycosylase (305 aa).

Asp148 acts as the Proton acceptor in catalysis.

Belongs to the uracil-DNA glycosylase (UDG) superfamily. UNG family.

It is found in the host nucleus. The enzyme catalyses Hydrolyzes single-stranded DNA or mismatched double-stranded DNA and polynucleotides, releasing free uracil.. Its function is as follows. Excises uracil residues from the DNA which can arise as a result of misincorporation of dUMP residues by DNA polymerase or deamination of cytosines. Therefore may reduce deleterious uracil incorporation into the viral genome, particularly in terminally differentiated cells which lack DNA repair enzymes. This is Uracil-DNA glycosylase from Varicella-zoster virus (strain Dumas) (HHV-3).